The chain runs to 121 residues: Small ribosomal subunit protein uS13 (121 aa).

The disordered stretch occupies residues 94–121; that stretch reads GLPVRGQNTKNNARTRKGKAVAIAGKKK. The span at 106–121 shows a compositional bias: basic residues; sequence ARTRKGKAVAIAGKKK.

Belongs to the universal ribosomal protein uS13 family. In terms of assembly, part of the 30S ribosomal subunit. Forms a loose heterodimer with protein S19. Forms two bridges to the 50S subunit in the 70S ribosome.

Functionally, located at the top of the head of the 30S subunit, it contacts several helices of the 16S rRNA. In the 70S ribosome it contacts the 23S rRNA (bridge B1a) and protein L5 of the 50S subunit (bridge B1b), connecting the 2 subunits; these bridges are implicated in subunit movement. Contacts the tRNAs in the A and P-sites. In Streptococcus sanguinis (strain SK36), this protein is Small ribosomal subunit protein uS13.